The chain runs to 551 residues: Dihydroxy-acid dehydratase (551 aa).

Cysteine 52 contributes to the [2Fe-2S] cluster binding site. Aspartate 84 contacts Mg(2+). Cysteine 125 serves as a coordination point for [2Fe-2S] cluster. Residues aspartate 126 and lysine 127 each coordinate Mg(2+). At lysine 127 the chain carries N6-carboxylysine. Residue cysteine 197 coordinates [2Fe-2S] cluster. Glutamate 448 serves as a coordination point for Mg(2+). Residue serine 474 is the Proton acceptor of the active site.

This sequence belongs to the IlvD/Edd family. In terms of assembly, homodimer. It depends on [2Fe-2S] cluster as a cofactor. Requires Mg(2+) as cofactor.

The catalysed reaction is (2R)-2,3-dihydroxy-3-methylbutanoate = 3-methyl-2-oxobutanoate + H2O. It carries out the reaction (2R,3R)-2,3-dihydroxy-3-methylpentanoate = (S)-3-methyl-2-oxopentanoate + H2O. It functions in the pathway amino-acid biosynthesis; L-isoleucine biosynthesis; L-isoleucine from 2-oxobutanoate: step 3/4. It participates in amino-acid biosynthesis; L-valine biosynthesis; L-valine from pyruvate: step 3/4. Functions in the biosynthesis of branched-chain amino acids. Catalyzes the dehydration of (2R,3R)-2,3-dihydroxy-3-methylpentanoate (2,3-dihydroxy-3-methylvalerate) into 2-oxo-3-methylpentanoate (2-oxo-3-methylvalerate) and of (2R)-2,3-dihydroxy-3-methylbutanoate (2,3-dihydroxyisovalerate) into 2-oxo-3-methylbutanoate (2-oxoisovalerate), the penultimate precursor to L-isoleucine and L-valine, respectively. This chain is Dihydroxy-acid dehydratase, found in Francisella tularensis subsp. tularensis (strain FSC 198).